The primary structure comprises 493 residues: Cytoplasmic tRNA 2-thiolation protein 2 (493 aa).

Serine 489 is modified (phosphoserine).

It belongs to the CTU2/NCS2 family. Interacts with NCS6 and URM1. May act by forming a heterodimer with NCS6.

It is found in the cytoplasm. It functions in the pathway tRNA modification; 5-methoxycarbonylmethyl-2-thiouridine-tRNA biosynthesis. Plays a central role in 2-thiolation of mcm(5)S(2)U at tRNA wobble positions of tRNA(Lys), tRNA(Glu) and tRNA(Gln). May act by forming a heterodimer with NCS6 that ligates sulfur from thiocarboxylated URM1 onto the uridine of tRNAs at wobble position. Prior mcm(5) tRNA modification by the elongator complex is required for 2-thiolation. May also be involved in protein urmylation. The polypeptide is Cytoplasmic tRNA 2-thiolation protein 2 (Saccharomyces cerevisiae (strain AWRI1631) (Baker's yeast)).